The primary structure comprises 570 residues: MASLFSSRLGSQSLSLLINIFFIFLIFLHFASQTPPPSGSIQTLNSFAGGDSDSCSGGLASLDDHRSKCSYIRSQSKCGPQGYIDYLKIFFCIFGQSPVLGHLVLSAWLFVLFYLLGDTAASYFCPSLDSLSKVLKLSPTMAGVTLLSLGNGAPDLFSSVVSFTRSNNGDFGLNSILGGAFFVSSFVVGTICVLIGSRDVAIDRNSFIRDVVFLLVALCCLGLIIFIGKVTIWVALCYLSIYLLYVGFLSVSHFFDRKKRMSDQILRSREDLAEMGVSLLGYIAEEKLALPEKTTQEFKIVFEDSPKRHRSCFSVLVSIIGLPLYLPRRLTIPVVCEEKWSKPCAVVSTAIAPVLLTELYCSHYSGSQRNLILYIISGSIGLIVGILAYLTTEKSHPPKKFSLVWLLGGFTMSVTWTYMIAQELVSLLISLGNIFGISPSVLGLTVLAWGNSLGDLIANVTVAFHGGNDGAQIALSGCYAGPLFNTVIGLGVPLVISSLAEYPGVYIIPSDNSLLETLGFLMVGLLWALVIMPKKKMRLDKLVGGGLLAIYLCFLSLRLARVFGVLDTDR.

The next 13 helical transmembrane spans lie at 14–34, 97–117, 141–161, 176–196, 212–232, 235–255, 344–364, 371–391, 401–421, 427–447, 479–499, 513–533, and 546–566; these read LSLL…ASQT, SPVL…YLLG, MAGV…SSVV, ILGG…VLIG, VFLL…KVTI, ALCY…SHFF, CAVV…CSHY, LILY…AYLT, FSLV…YMIA, LLIS…LTVL, YAGP…ISSL, SLLE…VIMP, and GLLA…FGVL.

It belongs to the Ca(2+):cation antiporter (CaCA) (TC 2.A.19) family. Cation/calcium exchanger (CCX) subfamily. Expressed in roots, leaves, stems and flowers.

It is found in the vacuole membrane. In terms of biological role, vacuolar membrane-localized H(+)-dependent K(+) and Na(+) transporter. In Arabidopsis thaliana (Mouse-ear cress), this protein is Cation/calcium exchanger 1 (CCX1).